The primary structure comprises 571 residues: Septation ring formation regulator EzrA (571 aa).

The Extracellular portion of the chain corresponds to 1–3 (MYY). A helical transmembrane segment spans residues 4–22 (MLIGFIIVVIAVIGAGYIL). Over 23 to 571 (KRKHYQRINE…ESKVSVDDIE (549 aa)) the chain is Cytoplasmic. 4 coiled-coil regions span residues 248-298 (LAQM…DTLE), 326-374 (DALA…ASGE), 400-437 (KFAE…ERER), and 478-529 (RIAE…ENHF).

This sequence belongs to the EzrA family.

It is found in the cell membrane. Its function is as follows. Negative regulator of FtsZ ring formation; modulates the frequency and position of FtsZ ring formation. Inhibits FtsZ ring formation at polar sites. Interacts either with FtsZ or with one of its binding partners to promote depolymerization. This Listeria monocytogenes serotype 4b (strain CLIP80459) protein is Septation ring formation regulator EzrA.